The sequence spans 549 residues: Hydroxylamine reductase (549 aa).

Cys-5, Cys-8, Cys-17, and Cys-23 together coordinate [4Fe-4S] cluster. Hybrid [4Fe-2O-2S] cluster-binding residues include His-243, Glu-267, Cys-311, Cys-403, Cys-431, Cys-456, Glu-491, and Lys-493. Cys-403 is modified (cysteine persulfide).

The protein belongs to the HCP family. Requires [4Fe-4S] cluster as cofactor. It depends on hybrid [4Fe-2O-2S] cluster as a cofactor.

Its subcellular location is the cytoplasm. The enzyme catalyses A + NH4(+) + H2O = hydroxylamine + AH2 + H(+). Catalyzes the reduction of hydroxylamine to form NH(3) and H(2)O. In Desulfitobacterium hafniense (strain Y51), this protein is Hydroxylamine reductase.